A 141-amino-acid polypeptide reads, in one-letter code: Ribosome-binding factor A (141 aa).

This sequence belongs to the RbfA family. As to quaternary structure, monomer. Binds 30S ribosomal subunits, but not 50S ribosomal subunits or 70S ribosomes.

Its subcellular location is the cytoplasm. One of several proteins that assist in the late maturation steps of the functional core of the 30S ribosomal subunit. Associates with free 30S ribosomal subunits (but not with 30S subunits that are part of 70S ribosomes or polysomes). Required for efficient processing of 16S rRNA. May interact with the 5'-terminal helix region of 16S rRNA. This is Ribosome-binding factor A from Beijerinckia indica subsp. indica (strain ATCC 9039 / DSM 1715 / NCIMB 8712).